The sequence spans 393 residues: MSSRYSERNGLSETEKMTLPKVRKRKAQLVDEIEALKNEVREVDEELDQVYYTHPKSKEYHKIVVNGRKKFNQDPWKALDWLASRNVVAKDPQALALWMKAGEGLSKSAIGEILGDNRPFALETLDRFTKEHKLHDVPIVPALRQYLFSFRLPGESQKINRILEKFAEVYANQNPSYGNADQAHTVAYSCIMVNTLLHNPNVKDKPSLEKYIEMNEQLLEKGAITIEQLTEVYESVSVTQFKIPDEVSTSGKGTVNDILLHAEREGWLFKQSSNPLFSGALSWKKRWFVLSENCLYYFDQMTDKEPKGIITLANVGIRKVEAPSRPFMFEIFSLSDGQIKACKTEQDGRLVEGRHSIYKICAVNDEDMRSWINAISRMMAPQQHLLARPKSTH.

Positions 1–12 (MSSRYSERNGLS) are enriched in polar residues. Positions 1–21 (MSSRYSERNGLSETEKMTLPK) are disordered. Residues 12–54 (SETEKMTLPKVRKRKAQLVDEIEALKNEVREVDEELDQVYYTH) adopt a coiled-coil conformation. Residues 53 to 239 (THPKSKEYHK…TEVYESVSVT (187 aa)) form the SEC7 domain. Residues 261–377 (HAEREGWLFK…MRSWINAISR (117 aa)) form the PH domain.

Functionally, promotes guanine-nucleotide exchange on ARF. Promotes the activation of ARF through replacement of GDP with GTP. Plays a role in cell shedding during embryogenesis, probably by promoting the endocytosis of cell adhesion molecules. In Caenorhabditis elegans, this protein is GTP exchange factor for ARFs 1 (grp-1).